A 263-amino-acid polypeptide reads, in one-letter code: Imidazole glycerol phosphate synthase subunit HisF (263 aa).

Active-site residues include D22 and D141.

Belongs to the HisA/HisF family. Heterodimer of HisH and HisF.

It localises to the cytoplasm. The catalysed reaction is 5-[(5-phospho-1-deoxy-D-ribulos-1-ylimino)methylamino]-1-(5-phospho-beta-D-ribosyl)imidazole-4-carboxamide + L-glutamine = D-erythro-1-(imidazol-4-yl)glycerol 3-phosphate + 5-amino-1-(5-phospho-beta-D-ribosyl)imidazole-4-carboxamide + L-glutamate + H(+). Its pathway is amino-acid biosynthesis; L-histidine biosynthesis; L-histidine from 5-phospho-alpha-D-ribose 1-diphosphate: step 5/9. Functionally, IGPS catalyzes the conversion of PRFAR and glutamine to IGP, AICAR and glutamate. The HisF subunit catalyzes the cyclization activity that produces IGP and AICAR from PRFAR using the ammonia provided by the HisH subunit. This chain is Imidazole glycerol phosphate synthase subunit HisF, found in Clavibacter michiganensis subsp. michiganensis (strain NCPPB 382).